The sequence spans 209 residues: MAKVHILDHPLIQHKLSLIRDENTGSKDFRELVEEVSMLMAYEVTRDFPLQDVEVKTPVATMTAKAIAGRKVGLIPILRAGLGMVDGMLRLIPTAKVGHVGLYRDPETLKPVEYYCKLPTDVEERDLIVIDPMLATGGSATAAITFLKDRGAKSIKLMCLIAAPEGIKEVQNYHDDVDIFVAAVDDYLNDHGYIIPGLGDAGDRLFGTK.

5-phospho-alpha-D-ribose 1-diphosphate is bound by residues Arg79, Arg104, and Asp131–Ser139. Uracil contacts are provided by residues Ile194 and Gly199 to Ala201. Asp200 serves as a coordination point for 5-phospho-alpha-D-ribose 1-diphosphate.

The protein belongs to the UPRTase family. The cofactor is Mg(2+).

It carries out the reaction UMP + diphosphate = 5-phospho-alpha-D-ribose 1-diphosphate + uracil. Its pathway is pyrimidine metabolism; UMP biosynthesis via salvage pathway; UMP from uracil: step 1/1. Allosterically activated by GTP. In terms of biological role, catalyzes the conversion of uracil and 5-phospho-alpha-D-ribose 1-diphosphate (PRPP) to UMP and diphosphate. This Desulfitobacterium hafniense (strain DSM 10664 / DCB-2) protein is Uracil phosphoribosyltransferase.